We begin with the raw amino-acid sequence, 450 residues long: Phosphoglucosamine mutase (450 aa).

The Phosphoserine intermediate role is filled by Ser102. Residues Ser102, Asp243, Asp245, and Asp247 each contribute to the Mg(2+) site. Ser102 carries the phosphoserine modification.

The protein belongs to the phosphohexose mutase family. Requires Mg(2+) as cofactor. In terms of processing, activated by phosphorylation.

It catalyses the reaction alpha-D-glucosamine 1-phosphate = D-glucosamine 6-phosphate. Its function is as follows. Catalyzes the conversion of glucosamine-6-phosphate to glucosamine-1-phosphate. This Rhizobium johnstonii (strain DSM 114642 / LMG 32736 / 3841) (Rhizobium leguminosarum bv. viciae) protein is Phosphoglucosamine mutase.